The sequence spans 144 residues: Eukaryotic translation initiation factor 1A (144 aa).

Over residues 1-15 (MPKNKGKGGKNRRRG) the composition is skewed to basic residues. Disordered regions lie at residues 1 to 26 (MPKN…KREL) and 114 to 144 (KINE…IDDI). Residues 16-26 (KNENESEKREL) are compositionally biased toward basic and acidic residues. The 75-residue stretch at 22-96 (EKRELVFKED…NKADVILKYN (75 aa)) folds into the S1-like domain. Residues 124-144 (GDDDEIQFDDIGDDDEDIDDI) are compositionally biased toward acidic residues.

This sequence belongs to the eIF-1A family. Component of the 43S pre-initiation complex (43S PIC), which is composed of the 40S ribosomal subunit, EIF1, eIF1A (EIF1AX), eIF3 complex, EIF5 and eIF2-GTP-initiator tRNA complex (eIF2 ternary complex). Interacts with EIF5; this interaction contributes to the maintenance of EIF1 within the open 43S PIC. Interacts through its C-terminal domain (CTD) with the CTD of EIF5B; from the location of the start codon by the 43S complex until the formation of the 80S complex.

It is found in the cytoplasm. Its function is as follows. Component of the 43S pre-initiation complex (43S PIC), which binds to the mRNA cap-proximal region, scans mRNA 5'-untranslated region, and locates the initiation codon. This protein enhances formation of the cap-proximal complex. Together with EIF1, facilitates scanning, start codon recognition, promotion of the assembly of 48S complex at the initiation codon (43S PIC becomes 48S PIC after the start codon is reached), and dissociation of aberrant complexes. After start codon location, together with EIF5B orients the initiator methionine-tRNA in a conformation that allows 60S ribosomal subunit joining to form the 80S initiation complex. Is released after 80S initiation complex formation, just after GTP hydrolysis by EIF5B, and before release of EIF5B. Its globular part is located in the A site of the 40S ribosomal subunit. Its interaction with EIF5 during scanning contribute to the maintenance of EIF1 within the open 43S PIC. In contrast to yeast orthologs, does not bind EIF1. The sequence is that of Eukaryotic translation initiation factor 1A (Eif1a) from Mus musculus (Mouse).